A 516-amino-acid chain; its full sequence is Nucleolar complex protein 4 homolog (516 aa).

3 helical membrane passes run 296–316, 347–367, and 375–395; these read SACD…FILI, FFHL…LVAA, and LALT…CNLL.

It belongs to the CBF/MAK21 family.

The protein localises to the nucleus membrane. Its subcellular location is the nucleus. The protein resides in the nucleolus. The protein is Nucleolar complex protein 4 homolog (Noc4l) of Mus musculus (Mouse).